The chain runs to 130 residues: uncharacterized protein (130 aa).

3 consecutive transmembrane segments (helical) span residues 34–54 (AILI…FAFF), 73–93 (LLLT…GWLA), and 107–127 (FGTG…IVWI).

It localises to the cell membrane. This is an uncharacterized protein from Mycoplasma pneumoniae (strain ATCC 29342 / M129 / Subtype 1) (Mycoplasmoides pneumoniae).